Consider the following 128-residue polypeptide: MAKLSNEELLDVFKEMTLLELSSFLKEFEETFDVTAAAPVAAAAPAAAGAAAPAAEEQDEFDVVLESAGDKKIQVIKVVREIVSGLGLKEAKELVEGAPKPILEKVDKEKANEAKTKLEESGAKVSLK.

Belongs to the bacterial ribosomal protein bL12 family. Homodimer. Part of the ribosomal stalk of the 50S ribosomal subunit. Forms a multimeric L10(L12)X complex, where L10 forms an elongated spine to which 2 to 4 L12 dimers bind in a sequential fashion. Binds GTP-bound translation factors.

Functionally, forms part of the ribosomal stalk which helps the ribosome interact with GTP-bound translation factors. Is thus essential for accurate translation. The polypeptide is Large ribosomal subunit protein bL12 (Saccharopolyspora erythraea (strain ATCC 11635 / DSM 40517 / JCM 4748 / NBRC 13426 / NCIMB 8594 / NRRL 2338)).